A 132-amino-acid chain; its full sequence is Small ribosomal subunit protein uS8c (132 aa).

Belongs to the universal ribosomal protein uS8 family. Part of the 30S ribosomal subunit.

It is found in the plastid. The protein localises to the chloroplast. One of the primary rRNA binding proteins, it binds directly to 16S rRNA central domain where it helps coordinate assembly of the platform of the 30S subunit. This is Small ribosomal subunit protein uS8c (rps8) from Drimys granadensis.